We begin with the raw amino-acid sequence, 246 residues long: Flagellar L-ring protein (246 aa).

The first 20 residues, 1–20 (MMQKCLSPKTLIAALVVLSA), serve as a signal peptide directing secretion. C21 carries N-palmitoyl cysteine lipidation. C21 carries the S-diacylglycerol cysteine lipid modification.

This sequence belongs to the FlgH family. The basal body constitutes a major portion of the flagellar organelle and consists of four rings (L,P,S, and M) mounted on a central rod.

It is found in the cell outer membrane. The protein resides in the bacterial flagellum basal body. Assembles around the rod to form the L-ring and probably protects the motor/basal body from shearing forces during rotation. The chain is Flagellar L-ring protein from Ruegeria pomeroyi (strain ATCC 700808 / DSM 15171 / DSS-3) (Silicibacter pomeroyi).